Reading from the N-terminus, the 417-residue chain is NADH-quinone oxidoreductase subunit D (417 aa).

This sequence belongs to the complex I 49 kDa subunit family. In terms of assembly, NDH-1 is composed of 14 different subunits. Subunits NuoB, C, D, E, F, and G constitute the peripheral sector of the complex.

The protein localises to the cell inner membrane. It carries out the reaction a quinone + NADH + 5 H(+)(in) = a quinol + NAD(+) + 4 H(+)(out). NDH-1 shuttles electrons from NADH, via FMN and iron-sulfur (Fe-S) centers, to quinones in the respiratory chain. The immediate electron acceptor for the enzyme in this species is believed to be ubiquinone. Couples the redox reaction to proton translocation (for every two electrons transferred, four hydrogen ions are translocated across the cytoplasmic membrane), and thus conserves the redox energy in a proton gradient. The chain is NADH-quinone oxidoreductase subunit D from Aromatoleum aromaticum (strain DSM 19018 / LMG 30748 / EbN1) (Azoarcus sp. (strain EbN1)).